Consider the following 123-residue polypeptide: Small ribosomal subunit protein uS12cz/uS12cy (123 aa).

It belongs to the universal ribosomal protein uS12 family. As to quaternary structure, part of the 30S ribosomal subunit.

It localises to the plastid. The protein resides in the chloroplast. In terms of biological role, with S4 and S5 plays an important role in translational accuracy. Located at the interface of the 30S and 50S subunits. This is Small ribosomal subunit protein uS12cz/uS12cy (rps12-A) from Cucumis sativus (Cucumber).